We begin with the raw amino-acid sequence, 320 residues long: Aspartate carbamoyltransferase catalytic subunit (320 aa).

Positions 57 and 58 each coordinate carbamoyl phosphate. K85 serves as a coordination point for L-aspartate. Carbamoyl phosphate is bound by residues R107, H141, and Q144. R174 and R228 together coordinate L-aspartate. Carbamoyl phosphate contacts are provided by G269 and P270.

It belongs to the aspartate/ornithine carbamoyltransferase superfamily. ATCase family. In terms of assembly, heterododecamer (2C3:3R2) of six catalytic PyrB chains organized as two trimers (C3), and six regulatory PyrI chains organized as three dimers (R2).

The catalysed reaction is carbamoyl phosphate + L-aspartate = N-carbamoyl-L-aspartate + phosphate + H(+). Its pathway is pyrimidine metabolism; UMP biosynthesis via de novo pathway; (S)-dihydroorotate from bicarbonate: step 2/3. Its function is as follows. Catalyzes the condensation of carbamoyl phosphate and aspartate to form carbamoyl aspartate and inorganic phosphate, the committed step in the de novo pyrimidine nucleotide biosynthesis pathway. The polypeptide is Aspartate carbamoyltransferase catalytic subunit (Mycobacterium ulcerans (strain Agy99)).